The primary structure comprises 132 residues: Nuclear transition protein 2 (132 aa).

Positions 1 to 20 are enriched in polar residues; it reads MDTKTQSLPNTHAQPHSNSR. The tract at residues 1–132 is disordered; it reads MDTKTQSLPN…KRQSSGRKYN (132 aa). Zn(2+) contacts are provided by His12, His16, His24, Cys29, Cys31, and Cys35. Positions 37–59 are enriched in basic residues; sequence SRSRSRSCRSRSSSRRPRSHRSP. Residues 82–94 are compositionally biased toward polar residues; it reads SHQCPSRPVTHSC. Residues 105-113 carry the Nuclear localization signal motif; that stretch reads GKVIKRKQV. Residues 108-132 are compositionally biased toward basic residues; it reads IKRKQVKRSKQVYKRKRQSSGRKYN. Ser127 carries the post-translational modification Phosphoserine.

This sequence belongs to the nuclear transition protein 2 family. In terms of tissue distribution, testis.

The protein resides in the nucleus. The protein localises to the nucleolus. It is found in the chromosome. In terms of biological role, plays a key role in the replacement of histones to protamine in the elongating spermatids of mammals. In condensing spermatids, loaded onto the nucleosomes, where it promotes the recruitment and processing of protamines, which are responsible for histone eviction. The sequence is that of Nuclear transition protein 2 (TNP2) from Bos taurus (Bovine).